We begin with the raw amino-acid sequence, 419 residues long: D-amino acid dehydrogenase (419 aa).

FAD is bound at residue valine 3–tyrosine 17.

This sequence belongs to the DadA oxidoreductase family. The cofactor is FAD.

The enzyme catalyses a D-alpha-amino acid + A + H2O = a 2-oxocarboxylate + AH2 + NH4(+). It participates in amino-acid degradation; D-alanine degradation; NH(3) and pyruvate from D-alanine: step 1/1. Oxidative deamination of D-amino acids. The protein is D-amino acid dehydrogenase of Chromohalobacter salexigens (strain ATCC BAA-138 / DSM 3043 / CIP 106854 / NCIMB 13768 / 1H11).